A 161-amino-acid chain; its full sequence is Putative acetyltransferase SAV0762 (161 aa).

This sequence belongs to the transferase hexapeptide repeat family.

The sequence is that of Putative acetyltransferase SAV0762 from Staphylococcus aureus (strain Mu50 / ATCC 700699).